A 213-amino-acid chain; its full sequence is tRNA (guanine-N(7)-)-methyltransferase (213 aa).

S-adenosyl-L-methionine-binding residues include Asp40, Glu65, Asn92, and Asp118. Residue Asp118 is part of the active site. Lys122 and Asp154 together coordinate substrate.

It belongs to the class I-like SAM-binding methyltransferase superfamily. TrmB family.

It catalyses the reaction guanosine(46) in tRNA + S-adenosyl-L-methionine = N(7)-methylguanosine(46) in tRNA + S-adenosyl-L-homocysteine. It functions in the pathway tRNA modification; N(7)-methylguanine-tRNA biosynthesis. Functionally, catalyzes the formation of N(7)-methylguanine at position 46 (m7G46) in tRNA. The chain is tRNA (guanine-N(7)-)-methyltransferase from Synechococcus elongatus (strain ATCC 33912 / PCC 7942 / FACHB-805) (Anacystis nidulans R2).